The primary structure comprises 504 residues: Lysine--tRNA ligase (504 aa).

E411 and E418 together coordinate Mg(2+).

This sequence belongs to the class-II aminoacyl-tRNA synthetase family. In terms of assembly, homodimer. Mg(2+) serves as cofactor.

The protein resides in the cytoplasm. It carries out the reaction tRNA(Lys) + L-lysine + ATP = L-lysyl-tRNA(Lys) + AMP + diphosphate. This chain is Lysine--tRNA ligase, found in Clostridium botulinum (strain Loch Maree / Type A3).